Reading from the N-terminus, the 381-residue chain is Alkanesulfonate monooxygenase (381 aa).

It belongs to the SsuD family. As to quaternary structure, homotetramer.

The enzyme catalyses an alkanesulfonate + FMNH2 + O2 = an aldehyde + FMN + sulfite + H2O + 2 H(+). Functionally, catalyzes the desulfonation of aliphatic sulfonates. The sequence is that of Alkanesulfonate monooxygenase from Escherichia coli (strain SMS-3-5 / SECEC).